The chain runs to 372 residues: N-methyl-L-tryptophan oxidase (372 aa).

Residue 4 to 34 participates in FAD binding; sequence DLIIIGSGSVGAAAGYYATRAGLNVLMTDAH. C308 carries the S-8alpha-FAD cysteine modification.

Belongs to the MSOX/MTOX family. MTOX subfamily. Monomer. It depends on FAD as a cofactor.

It catalyses the reaction N(alpha)-methyl-L-tryptophan + O2 + H2O = L-tryptophan + formaldehyde + H2O2. Its function is as follows. Catalyzes the oxidative demethylation of N-methyl-L-tryptophan. The protein is N-methyl-L-tryptophan oxidase of Escherichia coli O81 (strain ED1a).